Reading from the N-terminus, the 400-residue chain is Phosphoglycerate kinase (400 aa).

Residues 21–23 (DFN), arginine 36, 59–62 (HCSR), arginine 118, and arginine 151 each bind substrate. ATP-binding positions include lysine 201, glutamate 323, and 353-356 (GGDT).

The protein belongs to the phosphoglycerate kinase family. As to quaternary structure, monomer.

It localises to the cytoplasm. The catalysed reaction is (2R)-3-phosphoglycerate + ATP = (2R)-3-phospho-glyceroyl phosphate + ADP. It functions in the pathway carbohydrate degradation; glycolysis; pyruvate from D-glyceraldehyde 3-phosphate: step 2/5. This Bartonella bacilliformis (strain ATCC 35685 / KC583 / Herrer 020/F12,63) protein is Phosphoglycerate kinase.